Here is a 98-residue protein sequence, read N- to C-terminus: NADH-ubiquinone oxidoreductase chain 4L (98 aa).

The next 3 membrane-spanning stretches (helical) occupy residues 2–22 (PSIS…MLIF), 29–49 (SLLC…LTIL), and 61–81 (ILLL…LVTV).

Belongs to the complex I subunit 4L family. In terms of assembly, core subunit of respiratory chain NADH dehydrogenase (Complex I) which is composed of 45 different subunits.

It localises to the mitochondrion inner membrane. It carries out the reaction a ubiquinone + NADH + 5 H(+)(in) = a ubiquinol + NAD(+) + 4 H(+)(out). Core subunit of the mitochondrial membrane respiratory chain NADH dehydrogenase (Complex I) which catalyzes electron transfer from NADH through the respiratory chain, using ubiquinone as an electron acceptor. Part of the enzyme membrane arm which is embedded in the lipid bilayer and involved in proton translocation. This Lemur catta (Ring-tailed lemur) protein is NADH-ubiquinone oxidoreductase chain 4L (MT-ND4L).